Here is a 351-residue protein sequence, read N- to C-terminus: Phospho-N-acetylmuramoyl-pentapeptide-transferase (351 aa).

The next 10 helical transmembrane spans lie at Thr17 to Leu37, Ile63 to Ile83, Leu85 to Phe105, Ile135 to Phe155, Ser158 to Ala178, Gly190 to Thr210, Leu230 to Tyr250, Ile254 to Ile274, Ile279 to Val299, and Gln328 to Leu348.

Belongs to the glycosyltransferase 4 family. MraY subfamily. Requires Mg(2+) as cofactor.

Its subcellular location is the cell inner membrane. The enzyme catalyses UDP-N-acetyl-alpha-D-muramoyl-L-alanyl-gamma-D-glutamyl-meso-2,6-diaminopimeloyl-D-alanyl-D-alanine + di-trans,octa-cis-undecaprenyl phosphate = di-trans,octa-cis-undecaprenyl diphospho-N-acetyl-alpha-D-muramoyl-L-alanyl-D-glutamyl-meso-2,6-diaminopimeloyl-D-alanyl-D-alanine + UMP. It functions in the pathway cell wall biogenesis; peptidoglycan biosynthesis. Its function is as follows. Catalyzes the initial step of the lipid cycle reactions in the biosynthesis of the cell wall peptidoglycan: transfers peptidoglycan precursor phospho-MurNAc-pentapeptide from UDP-MurNAc-pentapeptide onto the lipid carrier undecaprenyl phosphate, yielding undecaprenyl-pyrophosphoryl-MurNAc-pentapeptide, known as lipid I. This is Phospho-N-acetylmuramoyl-pentapeptide-transferase from Borrelia hermsii (strain HS1 / DAH).